The sequence spans 245 residues: GDSL esterase/lipase At4g16220 (245 aa).

The signal sequence occupies residues 1-24 (MSSLVSRCQVIALLVLFFFGVCLA). Catalysis depends on Ser37, which acts as the Nucleophile.

The protein belongs to the 'GDSL' lipolytic enzyme family.

It is found in the secreted. In Arabidopsis thaliana (Mouse-ear cress), this protein is GDSL esterase/lipase At4g16220.